A 476-amino-acid polypeptide reads, in one-letter code: Replication factor C large subunit (476 aa).

Residue 43 to 50 coordinates ATP; the sequence is GKPGIGKT. A disordered region spans residues 435-476; the sequence is LEALRMQEPPVPETPPAAEEQPLEEPQEEKKLAPKQATLDFF.

Belongs to the activator 1 small subunits family. RfcL subfamily. As to quaternary structure, heteromultimer composed of small subunits (RfcS) and large subunits (RfcL).

Part of the RFC clamp loader complex which loads the PCNA sliding clamp onto DNA. This chain is Replication factor C large subunit, found in Methanocorpusculum labreanum (strain ATCC 43576 / DSM 4855 / Z).